A 261-amino-acid polypeptide reads, in one-letter code: Putative hydro-lyase Nther_1142 (261 aa).

It belongs to the D-glutamate cyclase family.

The sequence is that of Putative hydro-lyase Nther_1142 from Natranaerobius thermophilus (strain ATCC BAA-1301 / DSM 18059 / JW/NM-WN-LF).